The primary structure comprises 3955 residues: Nonribosomal peptide synthetase fmqA (3955 aa).

The segment at 293–691 is adenylation 1; it reads SYSELETLSL…AQACCTIRNV (399 aa). Positions 806–879 constitute a Carrier 1 domain; sequence THKETLIHQL…DLARLTDVVN (74 aa). Ser-840 carries the O-(pantetheine 4'-phosphoryl)serine modification. The condensation 1 stretch occupies residues 916 to 1187; the sequence is QDIYPCTPLQ…IATVPLRVRL (272 aa). The interval 1371 to 1766 is adenylation 2; the sequence is TYAELGELSD…DEVEKHVYQC (396 aa). The 77-residue stretch at 1880-1956 folds into the Carrier 2 domain; sequence EPTSVAEREM…KIMSHESSLS (77 aa). Ser-1917 is modified (O-(pantetheine 4'-phosphoryl)serine). Residues 1970-2261 are epimerase; it reads FALSPIQQMF…FTTMWPVVAE (292 aa). The condensation 2 stretch occupies residues 2438-2724; the sequence is EDIYPCSPSQ…FNPLPCRVHL (287 aa). The interval 2906 to 3299 is adenylation 3; that stretch reads TYGQLDELSS…GEVEANVQHC (394 aa). A Carrier 3 domain is found at 3422 to 3498; that stretch reads APSTEEEKKL…DLAKVAVPKS (77 aa). Ser-3459 is modified (O-(pantetheine 4'-phosphoryl)serine). The interval 3541–3805 is condensation 3; that stretch reads PGTQAQQFFI…CLNFIPLRVM (265 aa).

It belongs to the NRP synthetase family. Interacts with the mitogen-activated protein kinase mpkA.

Its subcellular location is the cytoplasmic vesicle. It functions in the pathway alkaloid biosynthesis. Its function is as follows. Nonribosomal peptide synthetase; part of the gene cluster that mediates the biosynthesis of the antitumor fumiquinazolines that confer a dual-usage capability to defend against phagocytes in the environment and animal hosts. The simplest member is fumiquinazoline F (FQF) with a 6-6-6 tricyclic core derived from anthranilic acid (Ant), tryptophan (Trp), and alanine (Ala). The trimodular NRPS fmqA is responsible for FQF formation. Modules 1, 2 and 3 of fmqA are predicted to activate and load Ant, Trp and Ala, respectively, providing for the assembly of an Ant-Trp-Ala-S-enzyme intermediate that would undergo double cyclization for chain release and generation of the tricyclic 6-6-6 product fumiquinazoline F. The presence of an E domain predicted for module 2 of fmqA is consistent with epimerization of L-Trp to D-Trp during assembly to generate the R-stereocenter at C14 of FQF. The FAD-dependent monooxygenase fmqB and the monomodular NRPS fmqC then maturate FQF to FQA. FmqB oxidizes the 2',3'-double bond of the indole side chain of FQF, and fmqC activates L-Ala as the adenylate, installs it as the pantetheinyl thioester on its carrier protein domain, and acylates the oxidized indole for subsequent intramolecular cyclization to create the 6-5-5-imidazolindolone of FQA. The FAD-linked oxidoreductase fmqD introduces a third layer of scaffold complexity by converting FQA to the spirohemiaminal FQC, presumably by catalyzing the formation of a transient imine within the pyrazinone ring. FQC subsequently converts nonenzymatically to the known cyclic aminal FQD. This Aspergillus fumigatus (strain ATCC MYA-4609 / CBS 101355 / FGSC A1100 / Af293) (Neosartorya fumigata) protein is Nonribosomal peptide synthetase fmqA.